The chain runs to 1867 residues: Probable serine/threonine-protein kinase roco8 (1867 aa).

Positions 16–93 (SSDGLQIKDR…DDYIFYQFDN (78 aa)) constitute a DEP 1 domain. Disordered stretches follow at residues 96–115 (NNNN…TTAT) and 121–225 (VSTK…NSFN). Residues 121-223 (VSTKIGSIGK…NSNSTYNSNS (103 aa)) are compositionally biased toward low complexity. The region spanning 264–342 (GDKGLKLQKK…NNNNGGGGVM (79 aa)) is the DEP 2 domain. 8 LRR repeats span residues 491–512 (RLDD…IINT), 515–536 (FLRI…ESIA), 540–561 (NLES…FSRL), 563–584 (LLTK…VFQL), 586–607 (NLEE…IGSL), 609–631 (SLEK…LGLL), 633–656 (RLKS…STLP), and 657–678 (LLEQ…ITSK). The Roc domain maps to 693–941 (GTETLSHIKL…NEIIQTLLNQ (249 aa)). Disordered stretches follow at residues 763–813 (QNGI…KKRP) and 942–961 (SNNN…KQSN). A compositionally biased stretch (low complexity) spans 768-793 (TSSSNLNLSTGTLPPPTQLSSSTSEL). A COR domain is found at 974-1111 (PSIYITLETN…ILYTLKNNSN (138 aa)). The disordered stretch occupies residues 1163–1207 (SPSLSLSNSSQSVFTNPNNNNNNKSEQQQQQQQQQQQPQPISTSP). The Protein kinase domain maps to 1456-1864 (LIYQEEIGVG…TLNEIKDSTI (409 aa)). ATP is bound by residues 1462–1470 (IGVGGFSRV) and Lys-1483. The segment at 1509 to 1546 (SNSSLSISLSSSTSSLSPPIVNNNNNNNNLNNNLNNLN) is disordered. Asp-1721 (proton acceptor) is an active-site residue.

The protein belongs to the protein kinase superfamily. TKL Ser/Thr protein kinase family. ROCO subfamily.

The enzyme catalyses L-seryl-[protein] + ATP = O-phospho-L-seryl-[protein] + ADP + H(+). It carries out the reaction L-threonyl-[protein] + ATP = O-phospho-L-threonyl-[protein] + ADP + H(+). The chain is Probable serine/threonine-protein kinase roco8 (roco8) from Dictyostelium discoideum (Social amoeba).